Consider the following 345-residue polypeptide: Acetylserotonin O-methyltransferase (345 aa).

S-adenosyl-L-methionine-binding positions include Y147, W164, D210, 235–237 (GDF), and R252. H255 acts as the Proton donor/acceptor in catalysis. Residues D256, N302, and Q306 each contribute to the substrate site.

Belongs to the class I-like SAM-binding methyltransferase superfamily. Cation-independent O-methyltransferase family. Homodimer. Expressed in the pineal gland (at protein level). In the retina, very low expression is found at the mRNA level, and not at the protein level.

The catalysed reaction is N-acetylserotonin + S-adenosyl-L-methionine = melatonin + S-adenosyl-L-homocysteine + H(+). It participates in aromatic compound metabolism; melatonin biosynthesis; melatonin from serotonin: step 1/2. Its function is as follows. Catalyzes the transfer of a methyl group onto N-acetylserotonin, producing melatonin (N-acetyl-5-methoxytryptamine). Does not show Acetylserotonin O-methyltransferase activity. This chain is Acetylserotonin O-methyltransferase (ASMT), found in Homo sapiens (Human).